Consider the following 520-residue polypeptide: GMP synthase [glutamine-hydrolyzing] (520 aa).

In terms of domain architecture, Glutamine amidotransferase type-1 spans 3-200 (AIAIIDFGSQ…FLDIANCKRD (198 aa)). Residue cysteine 84 is the Nucleophile of the active site. Catalysis depends on residues histidine 175 and glutamate 177. Positions 201–386 (WTMKSFIEEQ…IGLSDEIIFQ (186 aa)) constitute a GMPS ATP-PPase domain. 228 to 234 (SGGVDSS) contacts ATP.

In terms of assembly, homodimer.

The catalysed reaction is XMP + L-glutamine + ATP + H2O = GMP + L-glutamate + AMP + diphosphate + 2 H(+). It participates in purine metabolism; GMP biosynthesis; GMP from XMP (L-Gln route): step 1/1. Its function is as follows. Catalyzes the synthesis of GMP from XMP. The chain is GMP synthase [glutamine-hydrolyzing] from Wolbachia pipientis wMel.